Here is a 129-residue protein sequence, read N- to C-terminus: Small ribosomal subunit protein uS9 (129 aa).

The segment at 107 to 129 is disordered; the sequence is SRTVERKKYGRRKARRSPQFSKR. A compositionally biased stretch (basic residues) spans 114-129; the sequence is KYGRRKARRSPQFSKR.

This sequence belongs to the universal ribosomal protein uS9 family.

The chain is Small ribosomal subunit protein uS9 from Campylobacter jejuni subsp. jejuni serotype O:23/36 (strain 81-176).